The following is a 222-amino-acid chain: Sugar fermentation stimulation protein homolog (222 aa).

This sequence belongs to the SfsA family.

This chain is Sugar fermentation stimulation protein homolog, found in Thermotoga petrophila (strain ATCC BAA-488 / DSM 13995 / JCM 10881 / RKU-1).